The primary structure comprises 362 residues: Olfactory receptor 5AU1 (362 aa).

Topologically, residues 1–79 (MTEFHLQSQM…TDPQLQRLLF (79 aa)) are extracellular. An N-linked (GlcNAc...) asparagine glycan is attached at N56. A helical membrane pass occupies residues 80 to 100 (VVFLGMYTATLLGNLVMFLLI). The Cytoplasmic segment spans residues 101-116 (HVSATLHTPMYSLLKS). The chain crosses the membrane as a helical span at residues 117–139 (LSFLDFCYSSTVVPQTLVNFLAK). Residues 140 to 150 (RKVISYFGCMT) are Extracellular-facing. C148 and C230 are joined by a disulfide. A helical transmembrane segment spans residues 151-171 (QMFFYAGFATSECYLIAAMAY). The Cytoplasmic segment spans residues 172-194 (DRYAAICNPLLYSTIMSPEVCAS). A helical transmembrane segment spans residues 195 to 215 (LIVGSYSAGFLNSLIHTGCIF). Topologically, residues 216-247 (SLKFCGAHVVTHFFCDGPPILSLSCVDTSLCE) are extracellular. The chain crosses the membrane as a helical span at residues 248–268 (ILLFIFAGFNLLSCTLTILIS). The Cytoplasmic portion of the chain corresponds to 269-290 (YFLILNTILKMSSAQGRFKAFS). A helical transmembrane segment spans residues 291–311 (TCASHLTAICLFFGTTLFMYL). Residues 312–322 (RPRSSYSLTQD) lie on the Extracellular side of the membrane. The helical transmembrane segment at 323–343 (RTVAVIYTVVIPVLNPLMYSL) threads the bilayer. Residues 344–362 (RNKDVKKALIKVWGRKTME) lie on the Cytoplasmic side of the membrane.

It belongs to the G-protein coupled receptor 1 family.

It localises to the cell membrane. Functionally, odorant receptor. The sequence is that of Olfactory receptor 5AU1 (OR5AU1) from Homo sapiens (Human).